Consider the following 214-residue polypeptide: GTP cyclohydrolase 1 (214 aa).

Cys-108, His-111, and Cys-179 together coordinate Zn(2+).

This sequence belongs to the GTP cyclohydrolase I family. As to quaternary structure, toroid-shaped homodecamer, composed of two pentamers of five dimers.

It catalyses the reaction GTP + H2O = 7,8-dihydroneopterin 3'-triphosphate + formate + H(+). Its pathway is cofactor biosynthesis; 7,8-dihydroneopterin triphosphate biosynthesis; 7,8-dihydroneopterin triphosphate from GTP: step 1/1. This is GTP cyclohydrolase 1 from Shewanella loihica (strain ATCC BAA-1088 / PV-4).